The primary structure comprises 234 residues: Small ribosomal subunit protein uS3 (234 aa).

In terms of domain architecture, KH type-2 spans 17-86 (VEKFLTKELK…SPQVEVQQVQ (70 aa)).

This sequence belongs to the universal ribosomal protein uS3 family. In terms of assembly, part of the 30S ribosomal subunit.

Binds the lower part of the 30S subunit head. The chain is Small ribosomal subunit protein uS3 from Methanoculleus marisnigri (strain ATCC 35101 / DSM 1498 / JR1).